A 114-amino-acid chain; its full sequence is Flagellar hook-basal body complex protein FliE (114 aa).

It belongs to the FliE family.

It is found in the bacterial flagellum basal body. This Burkholderia vietnamiensis (strain G4 / LMG 22486) (Burkholderia cepacia (strain R1808)) protein is Flagellar hook-basal body complex protein FliE.